The primary structure comprises 252 residues: Adenosylcobinamide-GDP ribazoletransferase (252 aa).

7 consecutive transmembrane segments (helical) span residues 4-24 (LFKG…PYVE), 38-58 (PIIG…INYL), 60-80 (ISIV…TGML), 113-133 (FSVI…HSFL), 141-161 (ILMF…ITII), 190-210 (LVCI…LLIV), and 232-252 (VAGF…CLFT).

The protein belongs to the CobS family. The cofactor is Mg(2+).

Its subcellular location is the cell membrane. The enzyme catalyses alpha-ribazole + adenosylcob(III)inamide-GDP = adenosylcob(III)alamin + GMP + H(+). It carries out the reaction alpha-ribazole 5'-phosphate + adenosylcob(III)inamide-GDP = adenosylcob(III)alamin 5'-phosphate + GMP + H(+). The protein operates within cofactor biosynthesis; adenosylcobalamin biosynthesis; adenosylcobalamin from cob(II)yrinate a,c-diamide: step 7/7. Its function is as follows. Joins adenosylcobinamide-GDP and alpha-ribazole to generate adenosylcobalamin (Ado-cobalamin). Also synthesizes adenosylcobalamin 5'-phosphate from adenosylcobinamide-GDP and alpha-ribazole 5'-phosphate. This chain is Adenosylcobinamide-GDP ribazoletransferase, found in Clostridium botulinum (strain Alaska E43 / Type E3).